We begin with the raw amino-acid sequence, 460 residues long: MSDKLWGGRFTAKAAEWVDEFGASIHFDQKMAAEDIEGSIAHAKMLGKQGIISPEESEKIVSGLKIINEELIAGKIEFDVKNEDIHMNIESLLTEKIGPVAGKLHTARSRNDQVATDFHLWVKHRLPHVLESLTELQEELLTLATTHAGTIMSGYTHLQHAQPITYGHYLLAYFEMFQRDYERFEFNQKHTDILPLGAAALAGTTFPIDREFVASELGFDSIYHNSLDAVSDRDFALEFLSNAAILMMHLSRMAEELILWSTYEFNYIELSDDFSTGSSIMPQKKNADFAELVRGKTGRSYGALMGLLTTMKSLPLAYNKDMQEDKEQVFDIMDTVLASVKVFTGMLSGLTVHKERMLATTQDDFSNATELADYLATKGVPFREAHAIVGQLVLTGIQSKTPLQKMSLSDLQAVAPQIEEDIYDKLQSETAVNRRTSLGGTAVENVKKEIVRNKKVLEAR.

Belongs to the lyase 1 family. Argininosuccinate lyase subfamily.

It is found in the cytoplasm. The catalysed reaction is 2-(N(omega)-L-arginino)succinate = fumarate + L-arginine. The protein operates within amino-acid biosynthesis; L-arginine biosynthesis; L-arginine from L-ornithine and carbamoyl phosphate: step 3/3. The chain is Argininosuccinate lyase from Leuconostoc mesenteroides subsp. mesenteroides (strain ATCC 8293 / DSM 20343 / BCRC 11652 / CCM 1803 / JCM 6124 / NCDO 523 / NBRC 100496 / NCIMB 8023 / NCTC 12954 / NRRL B-1118 / 37Y).